Reading from the N-terminus, the 339-residue chain is Phosphate acyltransferase (339 aa).

This sequence belongs to the PlsX family. Homodimer. Probably interacts with PlsY.

Its subcellular location is the cytoplasm. The enzyme catalyses a fatty acyl-[ACP] + phosphate = an acyl phosphate + holo-[ACP]. Its pathway is lipid metabolism; phospholipid metabolism. Functionally, catalyzes the reversible formation of acyl-phosphate (acyl-PO(4)) from acyl-[acyl-carrier-protein] (acyl-ACP). This enzyme utilizes acyl-ACP as fatty acyl donor, but not acyl-CoA. The sequence is that of Phosphate acyltransferase from Helicobacter pylori (strain J99 / ATCC 700824) (Campylobacter pylori J99).